We begin with the raw amino-acid sequence, 85 residues long: Large ribosomal subunit protein bL27 (85 aa).

Belongs to the bacterial ribosomal protein bL27 family.

The protein is Large ribosomal subunit protein bL27 of Persephonella marina (strain DSM 14350 / EX-H1).